The chain runs to 441 residues: MVPPKLHVLFCLCGCLAVVYPFDWQYINPVAHMKSSAWVNKIQVLMAAASFGQTKIPRGNGPYSVGCTDLMFDHTNKGTFLRLYYPSQDNDRLDTLWIPNKEYFWGLSKFLGTHWLMGNILRLLFGSMTTPANWNSPLRPGEKYPLVVFSHGLGAFRTLYSAIGIDLASHGFIVAAVEHRDRSASATYYFKDQSAAEIGDKSWLYLRTLKQEEETHIRNEQVRQRAKECSQALSLILDIDHGKPVKNALDLKFDMEQLKDSIDREKIAVIGHSFGGATVIQTLSEDQRFRCGIALDAWMFPLGDEVYSRIPQPLFFINSEYFQYPANIIKMKKCYSPDKERKMITIRGSVHQNFADFTFATGKIIGHMLKLKGDIDSNVAIDLSNKASLAFLQKHLGLHKDFDQWDCLIEGDDENLIPGTNINTTNQHIMLQNSSGIEKYN.

A signal peptide spans 1 to 21 (MVPPKLHVLFCLCGCLAVVYP). Ser-273 serves as the catalytic Nucleophile. Active-site charge relay system residues include Asp-296 and His-351. Asn-423 and Asn-433 each carry an N-linked (GlcNAc...) asparagine glycan.

This sequence belongs to the AB hydrolase superfamily. Lipase family. N-glycosylated. Macrophage-derived PLA2G7 carries sialylated complex-type N-glycans that hinder its binding to HDL particles. In terms of tissue distribution, plasma. Secreted by macrophages (at protein level).

It localises to the secreted. The protein resides in the extracellular space. It carries out the reaction a 1-O-alkyl-2-acetyl-sn-glycero-3-phosphocholine + H2O = a 1-O-alkyl-sn-glycero-3-phosphocholine + acetate + H(+). It catalyses the reaction 1-O-decyl-2-acetyl-sn-glycero-3-phosphocholine + H2O = 1-O-decyl-sn-glycero-3-phosphocholine + acetate + H(+). The enzyme catalyses 1-O-dodecyl-2-acetyl-sn-glycero-3-phosphocholine + H2O = 1-O-dodecyl-sn-glycero-3-phosphocholine + acetate + H(+). The catalysed reaction is 1-O-tetradecyl-2-acetyl-sn-glycero-3-phosphocholine + H2O = 1-O-tetradecyl-sn-glycero-3-phosphocholine + acetate + H(+). It carries out the reaction 1-O-hexadecyl-2-acetyl-sn-glycero-3-phosphocholine + H2O = 1-O-hexadecyl-sn-glycero-3-phosphocholine + acetate + H(+). It catalyses the reaction 1-O-octadecyl-2-acetyl-sn-glycero-3-phosphocholine + H2O = 1-O-octadecyl-sn-glycero-3-phosphocholine + acetate + H(+). The enzyme catalyses 1-hexadecanoyl-2-acetyl-sn-glycero-3-phosphocholine + H2O = 1-hexadecanoyl-sn-glycero-3-phosphocholine + acetate + H(+). The catalysed reaction is 1-hexadecanoyl-2-propionyl-sn-glycero-3-phosphocholine + H2O = propanoate + 1-hexadecanoyl-sn-glycero-3-phosphocholine + H(+). It carries out the reaction 1-hexadecanoyl-2-butanoyl-sn-glycero-3-phosphocholine + H2O = butanoate + 1-hexadecanoyl-sn-glycero-3-phosphocholine + H(+). It catalyses the reaction 1-hexadecanoyl-2-pentanoyl-sn-glycero-3-phosphocholine + H2O = pentanoate + 1-hexadecanoyl-sn-glycero-3-phosphocholine + H(+). The enzyme catalyses 1-hexadecanoyl-2-glutaroyl-sn-glycero-3-phosphocholine + H2O = glutarate + 1-hexadecanoyl-sn-glycero-3-phosphocholine + H(+). The catalysed reaction is 1-hexadecanoyl-2-(5-oxopentanoyl)-sn-glycero-3-phosphocholine + H2O = 5-oxopentanoate + 1-hexadecanoyl-sn-glycero-3-phosphocholine + H(+). It carries out the reaction 1-hexadecanoyl-2-(9-oxononanoyl)-sn-glycero-3-phosphocholine + H2O = 9-oxononanoate + 1-hexadecanoyl-sn-glycero-3-phosphocholine + H(+). It catalyses the reaction 1-hexadecanoyl-2-[9-hydroperoxy-(10E-octadecenoyl)]-sn-glycero-3-phosphocholine + H2O = 9-hydroperoxy-10E-octadecenoate + 1-hexadecanoyl-sn-glycero-3-phosphocholine + H(+). The enzyme catalyses 1-hexadecanoyl-2-(10-hydroperoxy-8E-octadecenoyl)-sn-glycero-3-phosphocholine + H2O = 10-hydroperoxy-(8E)-octadecenoate + 1-hexadecanoyl-sn-glycero-3-phosphocholine + H(+). Functionally, lipoprotein-associated calcium-independent phospholipase A2 involved in phospholipid catabolism during inflammatory and oxidative stress response. At the lipid-aqueous interface, hydrolyzes the ester bond of fatty acyl group attached at sn-2 position of phospholipids (phospholipase A2 activity). Specifically targets phospholipids with a short-chain fatty acyl group at sn-2 position. Can hydrolyze phospholipids with long fatty acyl chains, only if they carry oxidized functional groups. Hydrolyzes and inactivates platelet-activating factor (PAF, 1-O-alkyl-2-acetyl-sn-glycero-3-phosphocholine), a potent pro-inflammatory signaling lipid that acts through PTAFR on various innate immune cells. Hydrolyzes oxidatively truncated phospholipids carrying an aldehyde group at omega position, preventing their accumulation in low-density lipoprotein (LDL) particles and uncontrolled pro-inflammatory effects. As part of high-density lipoprotein (HDL) particles, can hydrolyze phospholipids having long-chain fatty acyl hydroperoxides at sn-2 position and protect against potential accumulation of these oxylipins in the vascular wall. Catalyzes the release from membrane phospholipids of F2-isoprostanes, lipid biomarkers of cellular oxidative damage. This chain is Platelet-activating factor acetylhydrolase (PLA2G7), found in Homo sapiens (Human).